The sequence spans 115 residues: Large ribosomal subunit protein bL19 (115 aa).

This sequence belongs to the bacterial ribosomal protein bL19 family.

Its function is as follows. This protein is located at the 30S-50S ribosomal subunit interface and may play a role in the structure and function of the aminoacyl-tRNA binding site. In Lachnospira eligens (strain ATCC 27750 / DSM 3376 / VPI C15-48 / C15-B4) (Eubacterium eligens), this protein is Large ribosomal subunit protein bL19.